Consider the following 453-residue polypeptide: MPHAVLDTARNFLRSFITPRRILVAVSGGSDSMGLLVALHSAIAADERRGFSLAACTVDHALRPQSACEAEDVAAFCAALGIAHRICRWEGAKPSTGIQAAARNKRYELLAEAADALGADCIAIGHTRDDQQETVAMRIARGKGDGAGDGQGEGHGGAGMAASMLYGRRIWVLRPFLGLARAEIRSFLQARGVSWIDDPSNANPAFERVRVRARIATSGGMPTPLGNGRQRAASSARAAALIEKRIRVHEALVAEVSARHAGEIDDPDWRRALLTVASVLGGREHMPAFATVQRLSQFLRSGEPGRMTAGRVVFDRRASGLYLYREARNLPVLAVGPGRQGAWDGRFTVKSRGPAVTVAADASGRLWTKRLIDAGLPAGIAKRGSTVAPEIASTDGAGLAFGEAPAQVEYHIGLYDTFLPGFDRIMADAVAVSFGRDRYPAPPVHDVLIEMET.

Serine 27 to serine 32 contributes to the ATP binding site.

Belongs to the tRNA(Ile)-lysidine synthase family.

Its subcellular location is the cytoplasm. It catalyses the reaction cytidine(34) in tRNA(Ile2) + L-lysine + ATP = lysidine(34) in tRNA(Ile2) + AMP + diphosphate + H(+). Functionally, ligates lysine onto the cytidine present at position 34 of the AUA codon-specific tRNA(Ile) that contains the anticodon CAU, in an ATP-dependent manner. Cytidine is converted to lysidine, thus changing the amino acid specificity of the tRNA from methionine to isoleucine. The chain is tRNA(Ile)-lysidine synthase from Rhizobium meliloti (strain 1021) (Ensifer meliloti).